The sequence spans 386 residues: S-adenosylmethionine synthase (386 aa).

Residue histidine 16 participates in ATP binding. Aspartate 18 serves as a coordination point for Mg(2+). Residue glutamate 44 participates in K(+) binding. L-methionine is bound by residues glutamate 57 and glutamine 100. The tract at residues 100 to 110 is flexible loop; it reads QSGDIAMGVDE. ATP contacts are provided by residues 165–167, aspartate 240, 246–247, alanine 263, and lysine 267; these read DAK and RK. Aspartate 240 lines the L-methionine pocket. Lysine 271 serves as a coordination point for L-methionine.

Belongs to the AdoMet synthase family. As to quaternary structure, homotetramer; dimer of dimers. Requires Mg(2+) as cofactor. K(+) serves as cofactor.

It localises to the cytoplasm. The enzyme catalyses L-methionine + ATP + H2O = S-adenosyl-L-methionine + phosphate + diphosphate. It participates in amino-acid biosynthesis; S-adenosyl-L-methionine biosynthesis; S-adenosyl-L-methionine from L-methionine: step 1/1. Catalyzes the formation of S-adenosylmethionine (AdoMet) from methionine and ATP. The overall synthetic reaction is composed of two sequential steps, AdoMet formation and the subsequent tripolyphosphate hydrolysis which occurs prior to release of AdoMet from the enzyme. The sequence is that of S-adenosylmethionine synthase from Hahella chejuensis (strain KCTC 2396).